We begin with the raw amino-acid sequence, 428 residues long: L-glutamyl-[BtrI acyl-carrier protein] decarboxylase (428 aa).

The residue at position 49 (K49) is an N6-(pyridoxal phosphate)lysine. Residues G228, 269–272 (ESGR), and Y375 each bind pyridoxal 5'-phosphate. R272 and Y375 together coordinate substrate.

It belongs to the Orn/Lys/Arg decarboxylase class-II family. Homodimer. Requires pyridoxal 5'-phosphate as cofactor.

It catalyses the reaction gamma-L-glutamyl-[BtrI ACP] + H(+) = 4-aminobutanoyl-[BtrI ACP] + CO2. It participates in antibiotic biosynthesis; butirosin biosynthesis. In terms of biological role, pyridoxal phosphate-dependent decarboxylase that catalyzes 1 step in the biosynthesis of the side chain of the aminoglycoside antibiotics in the biosynthetic pathway of butirosin. Able to decarboxylate L-ornithine, L-arginine, L-lysine, but not L-glutamate or any D-amino acids. Has low activity with substrates not bound to an acyl-carrier protein. The sequence is that of L-glutamyl-[BtrI acyl-carrier protein] decarboxylase (btrK) from Niallia circulans (Bacillus circulans).